Here is a 370-residue protein sequence, read N- to C-terminus: Anhydro-N-acetylmuramic acid kinase (370 aa).

An ATP-binding site is contributed by 12 to 19 (GTSLDGVD).

Belongs to the anhydro-N-acetylmuramic acid kinase family.

It catalyses the reaction 1,6-anhydro-N-acetyl-beta-muramate + ATP + H2O = N-acetyl-D-muramate 6-phosphate + ADP + H(+). It participates in amino-sugar metabolism; 1,6-anhydro-N-acetylmuramate degradation. It functions in the pathway cell wall biogenesis; peptidoglycan recycling. Its function is as follows. Catalyzes the specific phosphorylation of 1,6-anhydro-N-acetylmuramic acid (anhMurNAc) with the simultaneous cleavage of the 1,6-anhydro ring, generating MurNAc-6-P. Is required for the utilization of anhMurNAc either imported from the medium or derived from its own cell wall murein, and thus plays a role in cell wall recycling. The chain is Anhydro-N-acetylmuramic acid kinase from Pectobacterium atrosepticum (strain SCRI 1043 / ATCC BAA-672) (Erwinia carotovora subsp. atroseptica).